The sequence spans 223 residues: Glutathione S-transferase A1 (223 aa).

Met1 is modified (N-acetylmethionine). Position 2 is an N-acetylalanine; in Glutathione S-transferase A1, N-terminally processed (Ala2). The GST N-terminal domain occupies 3–83 (GKPVLHYFNA…YIATKYDLYG (81 aa)). Lys4 carries the post-translational modification N6-succinyllysine. Residues Tyr9, Lys45, 54 to 55 (QV), and 67 to 68 (QT) each bind glutathione. In terms of domain architecture, GST C-terminal spans 85–208 (DMKERALIDM…QPGSQRKPPM (124 aa)).

This sequence belongs to the GST superfamily. Alpha family. In terms of assembly, homodimer. As to expression, expressed in the liver, skin and kidney.

The catalysed reaction is RX + glutathione = an S-substituted glutathione + a halide anion + H(+). It carries out the reaction prostaglandin A2 + glutathione = prostaglandin A2-S-(R)-glutathione. It catalyses the reaction prostaglandin J2 + glutathione = prostaglandin J2-S-(R)-glutathione. The enzyme catalyses (13S)-hydroperoxy-(9Z,11E)-octadecadienoate + 2 glutathione = (13S)-hydroxy-(9Z,11E)-octadecadienoate + glutathione disulfide + H2O. The catalysed reaction is androst-5-ene-3,17-dione = androst-4-ene-3,17-dione. Its function is as follows. Glutathione S-transferase that catalyzes the nucleophilic attack of the sulfur atom of glutathione on the electrophilic groups of a wide range of exogenous and endogenous compounds. Involved in the formation of glutathione conjugates of both prostaglandin A2 (PGA2) and prostaglandin J2 (PGJ2). It also catalyzes the isomerization of D5-androstene-3,17-dione (AD) into D4-androstene-3,17-dione and may therefore play an important role in hormone biosynthesis. Through its glutathione-dependent peroxidase activity toward the fatty acid hydroperoxide (13S)-hydroperoxy-(9Z,11E)-octadecadienoate/13-HPODE it is also involved in the metabolism of oxidized linoleic acid. In Mus musculus (Mouse), this protein is Glutathione S-transferase A1 (Gsta1).